The chain runs to 265 residues: MRLYRDRAVVLRQHKLGEADRIVTLLTRDHGLVRAVAKGVRRTRSKFGARLEPFAHIDAQLHPGRNLDIVTQVVSIDAFATDIVSDYGRYTCACAMLETAERLAGEERAPAPALHGLTVSALRAVADGRRSRDLLLDAYLLRAMGIAGWAPALTECARCATPGPHRAFHVGAGGSVCPHCRPAGSTTPPPGVLDLMSALHDGDWEFAEQTPQSHRNYVSGLVAAHLQWHLERQLKTLPLVERTYHIDRTIADQRATLIGQDMDCG.

This sequence belongs to the RecO family.

Functionally, involved in DNA repair and RecF pathway recombination. This is DNA repair protein RecO from Mycolicibacterium paratuberculosis (strain ATCC BAA-968 / K-10) (Mycobacterium paratuberculosis).